Here is a 62-residue protein sequence, read N- to C-terminus: Ferredoxin-1 (62 aa).

4Fe-4S ferredoxin-type domains lie at W3–G32 and K33–N62. Residues C12 and C18 each coordinate [3Fe-4S] cluster. [4Fe-4S] cluster contacts are provided by C22, C42, C45, and C48. C52 is a [3Fe-4S] cluster binding site.

In terms of assembly, homodimer. It depends on [3Fe-4S] cluster as a cofactor. Requires [4Fe-4S] cluster as cofactor.

Ferredoxins are iron-sulfur proteins that transfer electrons in a wide variety of metabolic reactions. This ferredoxin serves as a carrier for pyruvate dehydrogenase. The chain is Ferredoxin-1 from Nitratidesulfovibrio vulgaris (strain DSM 19637 / Miyazaki F) (Desulfovibrio vulgaris).